The chain runs to 259 residues: Indole-3-glycerol phosphate synthase (259 aa).

Belongs to the TrpC family.

The enzyme catalyses 1-(2-carboxyphenylamino)-1-deoxy-D-ribulose 5-phosphate + H(+) = (1S,2R)-1-C-(indol-3-yl)glycerol 3-phosphate + CO2 + H2O. It functions in the pathway amino-acid biosynthesis; L-tryptophan biosynthesis; L-tryptophan from chorismate: step 4/5. This Dehalococcoides mccartyi (strain CBDB1) protein is Indole-3-glycerol phosphate synthase.